A 232-amino-acid polypeptide reads, in one-letter code: Small ribosomal subunit protein uS3 (232 aa).

Positions 39–107 (VRQYLTKALK…PAQINIAEVR (69 aa)) constitute a KH type-2 domain.

Belongs to the universal ribosomal protein uS3 family. As to quaternary structure, part of the 30S ribosomal subunit. Forms a tight complex with proteins S10 and S14.

In terms of biological role, binds the lower part of the 30S subunit head. Binds mRNA in the 70S ribosome, positioning it for translation. This chain is Small ribosomal subunit protein uS3, found in Pseudoalteromonas atlantica (strain T6c / ATCC BAA-1087).